Here is a 691-residue protein sequence, read N- to C-terminus: Amino-acid acetyltransferase, mitochondrial (691 aa).

The segment covering 1–27 (MSSTSLAWPRTAKSSLLQSADFSSTSK) has biased composition (polar residues). Disordered regions lie at residues 1-29 (MSSTSLAWPRTAKSSLLQSADFSSTSKGY) and 65-95 (RLKAQHSPKPQVKEPEKESKDDAPQPLPSGV). The span at 75–87 (QVKEPEKESKDDA) shows a compositional bias: basic and acidic residues. The 170-residue stretch at 512–681 (NRPRMSLDDP…YEAVCRSIQP (170 aa)) folds into the N-acetyltransferase domain.

Belongs to the acetyltransferase family.

It is found in the mitochondrion. The catalysed reaction is L-glutamate + acetyl-CoA = N-acetyl-L-glutamate + CoA + H(+). Its pathway is amino-acid biosynthesis; L-arginine biosynthesis; N(2)-acetyl-L-ornithine from L-glutamate: step 1/4. N-acetylglutamate synthase involved in arginine biosynthesis. This Aspergillus terreus (strain NIH 2624 / FGSC A1156) protein is Amino-acid acetyltransferase, mitochondrial (arg2).